A 459-amino-acid chain; its full sequence is UDP-N-acetylmuramoylalanine--D-glutamate ligase (459 aa).

119–125 is a binding site for ATP; that stretch reads GTNGKTT.

This sequence belongs to the MurCDEF family.

The protein localises to the cytoplasm. The enzyme catalyses UDP-N-acetyl-alpha-D-muramoyl-L-alanine + D-glutamate + ATP = UDP-N-acetyl-alpha-D-muramoyl-L-alanyl-D-glutamate + ADP + phosphate + H(+). The protein operates within cell wall biogenesis; peptidoglycan biosynthesis. In terms of biological role, cell wall formation. Catalyzes the addition of glutamate to the nucleotide precursor UDP-N-acetylmuramoyl-L-alanine (UMA). In Lacticaseibacillus paracasei (strain ATCC 334 / BCRC 17002 / CCUG 31169 / CIP 107868 / KCTC 3260 / NRRL B-441) (Lactobacillus paracasei), this protein is UDP-N-acetylmuramoylalanine--D-glutamate ligase.